We begin with the raw amino-acid sequence, 80 residues long: Antitoxin VapB15 (80 aa).

The segment at Asp60–Ser80 is disordered. Glu67 contacts Mg(2+). Residue Glu67 participates in Mn(2+) binding. Basic and acidic residues predominate over residues Asp71–Ser80.

As to quaternary structure, forms a VapB15-VapC15(2) heterotrimer and a VapB15(2)-VapC15(2) heterotetramer; each toxin pair forms a homodimer which creates a channel in which the antitoxin binds. It depends on Mg(2+) as a cofactor. The cofactor is Mn(2+).

Its function is as follows. Antitoxin component of a type II toxin-antitoxin (TA) system. Neutralizes the toxic effect of cognate toxin VapC15. The polypeptide is Antitoxin VapB15 (vapB15) (Mycobacterium tuberculosis (strain CDC 1551 / Oshkosh)).